Here is a 508-residue protein sequence, read N- to C-terminus: MGLPWYRVHTVVLNDPGRLLAVHIMHTALVAGWAGSMALYELAVFDPSDPVLDPMWRQGMFVIPFMTRLGITNSWGGWSITGGTITNPGIWSYEGVAGAHIVFSGLCFLAAIWHWVYWDLEIFCDERTGKPSLDLPKIFGIHLFLSGVACFGFGAFHVTGLYGPGIWVSDPYGLTGKVQSVNPAWGVEGFDPFVPGGIASHHIAAGTLGILAGLFHLSVRPPQRLYKGLRMGNIETVLSSSIAAVFFAAFVVAGTMWYGSATTPIELFGPTRYQWDQGYFQQEIYRRVGVSLAENKSLSEAWSKIPEKLAFYDYIGNNPAKGGLFRAGSMDNGDGIAVGWLGHPIFRDKEGRELFVRRMPTFFETFPVVLVDGDGIVRADVPFRRAESKYSVEQVGVTVEFYGGELNGVSYSDPATVKKYARRAQLGEIFELDRATLKSDGVFRSSPRGWFTFGHASFALLFFFGHIWHGARTLFRDVFAGIDPDLDAQVEFGAFQKLGDPTTRRQVV.

A run of 6 helical transmembrane segments spans residues 21 to 36, 101 to 115, 140 to 156, 203 to 218, 237 to 252, and 457 to 472; these read AVHI…WAGS, IVFS…IWHW, GIHL…FGAF, IAAG…FHLS, VLSS…AFVV, and SFAL…HGAR.

It belongs to the PsbB/PsbC family. PsbB subfamily. PSII is composed of 1 copy each of membrane proteins PsbA, PsbB, PsbC, PsbD, PsbE, PsbF, PsbH, PsbI, PsbJ, PsbK, PsbL, PsbM, PsbT, PsbX, PsbY, PsbZ, Psb30/Ycf12, at least 3 peripheral proteins of the oxygen-evolving complex and a large number of cofactors. It forms dimeric complexes. It depends on Binds multiple chlorophylls. PSII binds additional chlorophylls, carotenoids and specific lipids. as a cofactor.

It localises to the plastid. The protein localises to the chloroplast thylakoid membrane. One of the components of the core complex of photosystem II (PSII). It binds chlorophyll and helps catalyze the primary light-induced photochemical processes of PSII. PSII is a light-driven water:plastoquinone oxidoreductase, using light energy to abstract electrons from H(2)O, generating O(2) and a proton gradient subsequently used for ATP formation. This Buxus microphylla (Littleleaf boxwood) protein is Photosystem II CP47 reaction center protein.